Consider the following 78-residue polypeptide: Cytochrome c oxidase subunit 8, mitochondrial (78 aa).

The N-terminal 27 residues, 1–27, are a transit peptide targeting the mitochondrion; it reads MLCQQMIRTTAKRSSNIMTRPIIMKRS. Over 28-51 the chain is Mitochondrial matrix; the sequence is VHFKDGVYENIPFKVKGRKTPYAL. Residues 52-73 traverse the membrane as a helical segment; sequence SHFGFFAIGFAVPFVACYVQLK. Position 74 (K74) is a topological domain, mitochondrial intermembrane. The propeptide occupies 75-78; sequence SGAF.

It belongs to the cytochrome c oxidase VIIc family. Component of the cytochrome c oxidase (complex IV, CIV), a multisubunit enzyme composed of 12 subunits. The complex is composed of a catalytic core of 3 subunits COX1, COX2 and COX3, encoded in the mitochondrial DNA, and 9 supernumerary subunits COX4, COX5A (or COX5B), COX6, COX7, COX8, COX9, COX12, COX13 and COX26, which are encoded in the nuclear genome. The complex exists as a monomer or a dimer and forms supercomplexes (SCs) in the inner mitochondrial membrane with a dimer of ubiquinol-cytochrome c oxidoreductase (cytochrome b-c1 complex, complex III, CIII), resulting in 2 different assemblies (supercomplexes III(2)IV and III(2)IV(2)).

It is found in the mitochondrion inner membrane. It functions in the pathway energy metabolism; oxidative phosphorylation. Functionally, component of the cytochrome c oxidase, the last enzyme in the mitochondrial electron transport chain which drives oxidative phosphorylation. The respiratory chain contains 3 multisubunit complexes succinate dehydrogenase (complex II, CII), ubiquinol-cytochrome c oxidoreductase (cytochrome b-c1 complex, complex III, CIII) and cytochrome c oxidase (complex IV, CIV), that cooperate to transfer electrons derived from NADH and succinate to molecular oxygen, creating an electrochemical gradient over the inner membrane that drives transmembrane transport and the ATP synthase. Cytochrome c oxidase is the component of the respiratory chain that catalyzes the reduction of oxygen to water. Electrons originating from reduced cytochrome c in the intermembrane space (IMS) are transferred via the dinuclear copper A center (CU(A)) of COX2 and heme A of COX1 to the active site in COX1, a binuclear center (BNC) formed by heme A3 and copper B (CU(B)). The BNC reduces molecular oxygen to 2 water molecules using 4 electrons from cytochrome c in the IMS and 4 protons from the mitochondrial matrix. In Saccharomyces cerevisiae (strain ATCC 204508 / S288c) (Baker's yeast), this protein is Cytochrome c oxidase subunit 8, mitochondrial (COX8).